The sequence spans 203 residues: Superoxide dismutase [Mn] (203 aa).

Mn(2+)-binding residues include His27, His81, Asp164, and His168.

The protein belongs to the iron/manganese superoxide dismutase family. Homodimer. It depends on Mn(2+) as a cofactor.

The catalysed reaction is 2 superoxide + 2 H(+) = H2O2 + O2. Functionally, destroys superoxide anion radicals which are normally produced within the cells and which are toxic to biological systems. The protein is Superoxide dismutase [Mn] (sodA) of Pseudomonas putida (Arthrobacter siderocapsulatus).